We begin with the raw amino-acid sequence, 281 residues long: MTEILDGKAVAKTINEQTKARVAKQKRPVTLAVIYDPSNDGSQLYVGMKSRQAAKLGIVTRDIPISTDATTESVIQLVEELNDDESITGILVQSPLAKGIKERQIFSAVAPHKDADGLGATVQGMLFGDSLENYTVAATPQGVMTLLAQYNISLKGKNAVVVGRSQLFGRPMFALLTNADATVTLAHRYTEPTTLKALLKNADIVVVGVGIPNFIQGEDLKKGATVIDVGMNVVDGKATGDVNFSSAQGIAGYITPVPGGVGPMTIATLLENTVTLAEQHQ.

Position 163 to 165 (163 to 165 (GRS)) interacts with NADP(+).

The protein belongs to the tetrahydrofolate dehydrogenase/cyclohydrolase family. In terms of assembly, homodimer.

It catalyses the reaction (6R)-5,10-methylene-5,6,7,8-tetrahydrofolate + NADP(+) = (6R)-5,10-methenyltetrahydrofolate + NADPH. The enzyme catalyses (6R)-5,10-methenyltetrahydrofolate + H2O = (6R)-10-formyltetrahydrofolate + H(+). The protein operates within one-carbon metabolism; tetrahydrofolate interconversion. Functionally, catalyzes the oxidation of 5,10-methylenetetrahydrofolate to 5,10-methenyltetrahydrofolate and then the hydrolysis of 5,10-methenyltetrahydrofolate to 10-formyltetrahydrofolate. In Leuconostoc mesenteroides subsp. mesenteroides (strain ATCC 8293 / DSM 20343 / BCRC 11652 / CCM 1803 / JCM 6124 / NCDO 523 / NBRC 100496 / NCIMB 8023 / NCTC 12954 / NRRL B-1118 / 37Y), this protein is Bifunctional protein FolD.